We begin with the raw amino-acid sequence, 351 residues long: MTILSDVKALGQQIWLDNLSRSLVQSGELAQMLKQGVCGVTSNPAIFQKAFAGDALYADEVAALKQQDLTPKQRYETMAVADVQAACDVCLAEHESTGGKTGFVSLEVSPELSKDAQGTVEEARRLYAAIGCKNAMIKVPATDAGIDALETLVSDGISVNLTLLFSRVQTLKAYAAYARGIAKRLAAGQSVAHIHVVASFFISRVDGALDTTLPDHLKGKIAIALAKAAYQDWAQYFGSPEFAALETQGANRVQLLWASTGVKNPAYPDTLYVDSLIGAHTVNTVPDATLKAFIDHGTAKATLTEGADEAQAQLAETAALGIDVETLAARLQEDGLKQFEEAFEKLLAPLV.

The Schiff-base intermediate with substrate role is filled by Lys-138.

It belongs to the transaldolase family. Type 2 subfamily.

It localises to the cytoplasm. The catalysed reaction is D-sedoheptulose 7-phosphate + D-glyceraldehyde 3-phosphate = D-erythrose 4-phosphate + beta-D-fructose 6-phosphate. It functions in the pathway carbohydrate degradation; pentose phosphate pathway; D-glyceraldehyde 3-phosphate and beta-D-fructose 6-phosphate from D-ribose 5-phosphate and D-xylulose 5-phosphate (non-oxidative stage): step 2/3. Its function is as follows. Transaldolase is important for the balance of metabolites in the pentose-phosphate pathway. The protein is Transaldolase of Neisseria meningitidis serogroup C / serotype 2a (strain ATCC 700532 / DSM 15464 / FAM18).